The sequence spans 351 residues: Thiamine-phosphate synthase (351 aa).

The tract at residues Met-1 to Arg-127 is unknown. A disordered region spans residues Arg-64–Asp-84. Residues Val-128–Ser-351 are thiamine-phosphate synthase. 4-amino-2-methyl-5-(diphosphooxymethyl)pyrimidine-binding positions include Gln-178–Lys-182 and Asn-210. Residues Asp-211 and Asp-230 each coordinate Mg(2+). 4-amino-2-methyl-5-(diphosphooxymethyl)pyrimidine is bound at residue Ser-249. Thr-275 to Thr-277 is a 2-[(2R,5Z)-2-carboxy-4-methylthiazol-5(2H)-ylidene]ethyl phosphate binding site. 4-amino-2-methyl-5-(diphosphooxymethyl)pyrimidine is bound at residue Lys-278. Gly-305 is a binding site for 2-[(2R,5Z)-2-carboxy-4-methylthiazol-5(2H)-ylidene]ethyl phosphate.

Belongs to the thiamine-phosphate synthase family. Mg(2+) is required as a cofactor.

It catalyses the reaction 2-[(2R,5Z)-2-carboxy-4-methylthiazol-5(2H)-ylidene]ethyl phosphate + 4-amino-2-methyl-5-(diphosphooxymethyl)pyrimidine + 2 H(+) = thiamine phosphate + CO2 + diphosphate. The catalysed reaction is 2-(2-carboxy-4-methylthiazol-5-yl)ethyl phosphate + 4-amino-2-methyl-5-(diphosphooxymethyl)pyrimidine + 2 H(+) = thiamine phosphate + CO2 + diphosphate. The enzyme catalyses 4-methyl-5-(2-phosphooxyethyl)-thiazole + 4-amino-2-methyl-5-(diphosphooxymethyl)pyrimidine + H(+) = thiamine phosphate + diphosphate. The protein operates within cofactor biosynthesis; thiamine diphosphate biosynthesis; thiamine phosphate from 4-amino-2-methyl-5-diphosphomethylpyrimidine and 4-methyl-5-(2-phosphoethyl)-thiazole: step 1/1. In terms of biological role, condenses 4-methyl-5-(beta-hydroxyethyl)thiazole monophosphate (THZ-P) and 2-methyl-4-amino-5-hydroxymethyl pyrimidine pyrophosphate (HMP-PP) to form thiamine monophosphate (TMP). This Thermosynechococcus vestitus (strain NIES-2133 / IAM M-273 / BP-1) protein is Thiamine-phosphate synthase.